The following is a 493-amino-acid chain: Probable mannosyl-oligosaccharide alpha-1,2-mannosidase 1B (493 aa).

A signal peptide spans 1-18; that stretch reads MHLPSLSVALALVSSSLA. N-linked (GlcNAc...) asparagine glycosylation is found at N87 and N174. C324 and C353 form a disulfide bridge. Catalysis depends on E367, which acts as the Proton donor. N489 carries N-linked (GlcNAc...) asparagine glycosylation.

It belongs to the glycosyl hydrolase 47 family. As to quaternary structure, monomer. It depends on Ca(2+) as a cofactor. The cofactor is Mg(2+).

It is found in the cytoplasmic vesicle lumen. The catalysed reaction is N(4)-(alpha-D-Man-(1-&gt;2)-alpha-D-Man-(1-&gt;2)-alpha-D-Man-(1-&gt;3)-[alpha-D-Man-(1-&gt;2)-alpha-D-Man-(1-&gt;3)-[alpha-D-Man-(1-&gt;2)-alpha-D-Man-(1-&gt;6)]-alpha-D-Man-(1-&gt;6)]-beta-D-Man-(1-&gt;4)-beta-D-GlcNAc-(1-&gt;4)-beta-D-GlcNAc)-L-asparaginyl-[protein] (N-glucan mannose isomer 9A1,2,3B1,2,3) + 4 H2O = N(4)-(alpha-D-Man-(1-&gt;3)-[alpha-D-Man-(1-&gt;3)-[alpha-D-Man-(1-&gt;6)]-alpha-D-Man-(1-&gt;6)]-beta-D-Man-(1-&gt;4)-beta-D-GlcNAc-(1-&gt;4)-beta-D-GlcNAc)-L-asparaginyl-[protein] (N-glucan mannose isomer 5A1,2) + 4 beta-D-mannose. It carries out the reaction N(4)-(alpha-D-Man-(1-&gt;2)-alpha-D-Man-(1-&gt;2)-alpha-D-Man-(1-&gt;3)-[alpha-D-Man-(1-&gt;3)-[alpha-D-Man-(1-&gt;2)-alpha-D-Man-(1-&gt;6)]-alpha-D-Man-(1-&gt;6)]-beta-D-Man-(1-&gt;4)-beta-D-GlcNAc-(1-&gt;4)-beta-D-GlcNAc)-L-asparaginyl-[protein] (N-glucan mannose isomer 8A1,2,3B1,3) + 3 H2O = N(4)-(alpha-D-Man-(1-&gt;3)-[alpha-D-Man-(1-&gt;3)-[alpha-D-Man-(1-&gt;6)]-alpha-D-Man-(1-&gt;6)]-beta-D-Man-(1-&gt;4)-beta-D-GlcNAc-(1-&gt;4)-beta-D-GlcNAc)-L-asparaginyl-[protein] (N-glucan mannose isomer 5A1,2) + 3 beta-D-mannose. It participates in protein modification; protein glycosylation. Functionally, involved in the maturation of Asn-linked oligosaccharides. Progressively trims alpha-1,2-linked mannose residues from Man(9)GlcNAc(2) to produce Man(5)GlcNAc(2). The chain is Probable mannosyl-oligosaccharide alpha-1,2-mannosidase 1B (mns1B) from Aspergillus fumigatus (strain CBS 144.89 / FGSC A1163 / CEA10) (Neosartorya fumigata).